The chain runs to 909 residues: Disintegrin and metalloproteinase domain-containing protein 12 (909 aa).

The signal sequence occupies residues 1 to 28 (MAARPLPVSPARALLLALAGALLAPCEA). A propeptide spanning residues 29-207 (RGVSLWNQGR…SQTWARRHKR (179 aa)) is cleaved from the precursor. 2 N-linked (GlcNAc...) asparagine glycosylation sites follow: Asn-111 and Asn-149. The Cysteine switch motif lies at 177 to 184 (GSCGSHHN). Positions 179 and 350 each coordinate Zn(2+). Residues 208–708 (ETLKATKYVE…GPIRQADNQG (501 aa)) are Extracellular-facing. The Peptidase M12B domain occupies 214 to 416 (KYVELVIVAD…GMGVCLFNLP (203 aa)). Cystine bridges form between Cys-325–Cys-411, Cys-367–Cys-395, and Cys-369–Cys-378. Glu-351 is an active-site residue. Zn(2+) contacts are provided by His-354 and His-360. Residues Asn-381 and Asn-452 are each glycosylated (N-linked (GlcNAc...) asparagine). The Disintegrin domain maps to 424-510 (GQKCGNRFVE…HCPANVYLHD (87 aa)). Cys-482 and Cys-502 are joined by a disulfide. Asn-651 carries an N-linked (GlcNAc...) asparagine glycan. In terms of domain architecture, EGF-like spans 656 to 688 (GVHECAMQCHGRGVCNNRKNCHCEAHWAPPFCD). Disulfide bonds link Cys-660/Cys-670, Cys-664/Cys-676, and Cys-678/Cys-687. Residues 709–729 (LTIGILVTILCLLAAGFVVYL) traverse the membrane as a helical segment. Over 730–909 (KRKTLIRLLF…PRSTHTAYIK (180 aa)) the chain is Cytoplasmic. The segment at 822–862 (LHRAPRAPSVPARPLPAKPALRQAQGTCKPNPPQKPLPADP) is disordered. The SH3-binding; class II signature appears at 828-834 (APSVPAR). The SH3-binding; class I signature appears at 834-841 (RPLPAKPA). Positions 851-860 (PNPPQKPLPA) are enriched in pro residues. Residues 885-891 (RLAPLRP) carry the SH3-binding; class I motif. A Phosphotyrosine; by SRC modification is found at Tyr-907.

Interacts with alpha-actinin-2 and with syndecans. Interacts with SH3PXD2A. Interacts with FST3. Interacts with RACK1; the interaction is required for PKC-dependent translocation of ADAM12 to the cell membrane. It depends on Zn(2+) as a cofactor. In terms of processing, the precursor is cleaved by a furin endopeptidase. As to expression, isoform 1 is expressed in placenta and skeletal, cardiac, and smooth muscle. Isoform 2 seems to be expressed only in placenta or in embryo and fetus. Both forms were expressed in some tumor cells lines. Not detected in brain, lung, liver, kidney or pancreas.

Its subcellular location is the cell membrane. The protein resides in the secreted. Involved in skeletal muscle regeneration, specifically at the onset of cell fusion. Also involved in macrophage-derived giant cells (MGC) and osteoclast formation from mononuclear precursors. This Homo sapiens (Human) protein is Disintegrin and metalloproteinase domain-containing protein 12 (ADAM12).